The following is a 140-amino-acid chain: 3-hydroxyacyl-[acyl-carrier-protein] dehydratase FabZ (140 aa).

His47 is a catalytic residue.

This sequence belongs to the thioester dehydratase family. FabZ subfamily.

The protein localises to the cytoplasm. The catalysed reaction is a (3R)-hydroxyacyl-[ACP] = a (2E)-enoyl-[ACP] + H2O. In terms of biological role, involved in unsaturated fatty acids biosynthesis. Catalyzes the dehydration of short chain beta-hydroxyacyl-ACPs and long chain saturated and unsaturated beta-hydroxyacyl-ACPs. The chain is 3-hydroxyacyl-[acyl-carrier-protein] dehydratase FabZ from Streptococcus pneumoniae serotype 4 (strain ATCC BAA-334 / TIGR4).